Here is a 271-residue protein sequence, read N- to C-terminus: Phosphatidylglycerol--prolipoprotein diacylglyceryl transferase (271 aa).

A run of 3 helical transmembrane segments spans residues 17-37 (LAIH…FFLA), 63-83 (ILFL…CLFY), and 95-115 (IFAV…VLVS). Arginine 146 is an a 1,2-diacyl-sn-glycero-3-phospho-(1'-sn-glycerol) binding site. 3 helical membrane-spanning segments follow: residues 182–202 (SQVY…WLYA), 209–229 (GQVS…AEFF), and 243–263 (MSMG…LWIW).

It belongs to the Lgt family.

The protein localises to the cell inner membrane. The enzyme catalyses L-cysteinyl-[prolipoprotein] + a 1,2-diacyl-sn-glycero-3-phospho-(1'-sn-glycerol) = an S-1,2-diacyl-sn-glyceryl-L-cysteinyl-[prolipoprotein] + sn-glycerol 1-phosphate + H(+). Its pathway is protein modification; lipoprotein biosynthesis (diacylglyceryl transfer). In terms of biological role, catalyzes the transfer of the diacylglyceryl group from phosphatidylglycerol to the sulfhydryl group of the N-terminal cysteine of a prolipoprotein, the first step in the formation of mature lipoproteins. The polypeptide is Phosphatidylglycerol--prolipoprotein diacylglyceryl transferase (Polaromonas naphthalenivorans (strain CJ2)).